A 396-amino-acid polypeptide reads, in one-letter code: Cathepsin E (396 aa).

The first 19 residues, 1–19 (MKTLLLLLLVLLELGEAQG), serve as a signal peptide directing secretion. The propeptide at 20–53 (SLHRVPLRRHPSLKKKLRARSQLSEFWKSHNLDM) is activation peptide. The Peptidase A1 domain maps to 78 to 396 (YFGTISIGSP…NRVGLAPAVP (319 aa)). N-linked (GlcNAc...) asparagine glycosylation occurs at asparagine 90. Aspartate 96 is a catalytic residue. Disulfide bonds link cysteine 109-cysteine 114 and cysteine 272-cysteine 276. Aspartate 281 is a catalytic residue. The cysteines at positions 314 and 351 are disulfide-linked.

The protein belongs to the peptidase A1 family. Homodimer; disulfide-linked. In terms of processing, glycosylated. The nature of the carbohydrate chain varies between cell types. In fibroblasts, the proenzyme contains a high mannose-type oligosaccharide, while the mature enzyme contains a complex-type oligosaccharide. In erythrocyte membranes, both the proenzyme and mature enzyme contain a complex-type oligosaccharide. Two forms are produced by autocatalytic cleavage, form I begins at Ile-54, form II begins at Thr-57. As to expression, expressed abundantly in the stomach, the Clara cells of the lung and activated B-lymphocytes, and at lower levels in lymph nodes, skin and spleen. Not expressed in resting B-lymphocytes.

It is found in the endosome. It catalyses the reaction Similar to cathepsin D, but slightly broader specificity.. May have a role in immune function. Probably involved in the processing of antigenic peptides during MHC class II-mediated antigen presentation. May play a role in activation-induced lymphocyte depletion in the thymus, and in neuronal degeneration and glial cell activation in the brain. In Homo sapiens (Human), this protein is Cathepsin E (CTSE).